Here is a 468-residue protein sequence, read N- to C-terminus: Methionine aminopeptidase 2 (468 aa).

Positions 1–10 (MGSKTFEGEG) are enriched in basic and acidic residues. A disordered region spans residues 1–106 (MGSKTFEGEG…PPRVPLDDLF (106 aa)). The segment covering 16 to 25 (DPSNSTSPNS) has biased composition (polar residues). A compositionally biased stretch (basic and acidic residues) spans 31–40 (RGAHLSRDGD). Positions 46-56 (GDGDDGADGDE) are enriched in acidic residues. Residues 61 to 75 (VTTTPLTEQQPSSET) show a composition bias toward polar residues. A compositionally biased stretch (basic residues) spans 78–90 (KKKKRRKPKKKIS). His-219 is a substrate binding site. Residues Asp-240, Asp-251, and His-320 each coordinate a divalent metal cation. His-328 contributes to the substrate binding site. Residues Glu-353 and Glu-449 each contribute to the a divalent metal cation site.

The protein belongs to the peptidase M24A family. Methionine aminopeptidase eukaryotic type 2 subfamily. Co(2+) is required as a cofactor. The cofactor is Zn(2+). It depends on Mn(2+) as a cofactor. Fe(2+) serves as cofactor.

The protein localises to the cytoplasm. The enzyme catalyses Release of N-terminal amino acids, preferentially methionine, from peptides and arylamides.. Its function is as follows. Cotranslationally removes the N-terminal methionine from nascent proteins. The N-terminal methionine is often cleaved when the second residue in the primary sequence is small and uncharged (Met-Ala-, Cys, Gly, Pro, Ser, Thr, or Val). The polypeptide is Methionine aminopeptidase 2 (Aspergillus oryzae (strain ATCC 42149 / RIB 40) (Yellow koji mold)).